The sequence spans 167 residues: Protein archease (167 aa).

Ala2 bears the N-acetylalanine mark. Ca(2+)-binding residues include Asp39, Asp166, and Ile167.

It belongs to the archease family. In terms of assembly, component of the tRNA-splicing ligase complex.

Component of the tRNA-splicing ligase complex required to facilitate the enzymatic turnover of catalytic subunit RTCB. Together with DDX1, acts by facilitating the guanylylation of RTCB, a key intermediate step in tRNA ligation. In Bos taurus (Bovine), this protein is Protein archease (ZBTB8OS).